A 179-amino-acid chain; its full sequence is Large ribosomal subunit protein uL5 (179 aa).

The protein belongs to the universal ribosomal protein uL5 family. In terms of assembly, part of the 50S ribosomal subunit; part of the 5S rRNA/L5/L18/L25 subcomplex. Contacts the 5S rRNA and the P site tRNA. Forms a bridge to the 30S subunit in the 70S ribosome.

In terms of biological role, this is one of the proteins that bind and probably mediate the attachment of the 5S RNA into the large ribosomal subunit, where it forms part of the central protuberance. In the 70S ribosome it contacts protein S13 of the 30S subunit (bridge B1b), connecting the 2 subunits; this bridge is implicated in subunit movement. Contacts the P site tRNA; the 5S rRNA and some of its associated proteins might help stabilize positioning of ribosome-bound tRNAs. The chain is Large ribosomal subunit protein uL5 from Shewanella denitrificans (strain OS217 / ATCC BAA-1090 / DSM 15013).